Consider the following 481-residue polypeptide: Transcription factor TGA9 (481 aa).

The disordered stretch occupies residues 91-181 (QTLPTESSKS…GKQLDAKTLR (91 aa)). The segment covering 97–109 (SSKSGGESSDSGS) has biased composition (low complexity). The segment covering 110-126 (ANFSGKAESQQPESPMS) has biased composition (polar residues). Positions 143–155 (SSSTSGLPSTSRT) are enriched in low complexity. A Nuclear localization signal motif is present at residues 165 to 172 (KRKATTSG). The 45-residue stretch at 176–220 (DAKTLRRLAQNREAARKSRLRKKAYVQQLESSRIKLSQLEQELQR) folds into the bZIP domain. The basic motif stretch occupies residues 178–198 (KTLRRLAQNREAARKSRLRKK). The leucine-zipper stretch occupies residues 204–218 (LESSRIKLSQLEQEL). Positions 242–450 (AAIFDMEYGR…RALSSLWLSR (209 aa)) constitute a DOG1 domain.

It belongs to the bZIP family. As to quaternary structure, homodimer. Binds DNA as a dimer. Interacts with floral glutaredoxins GRXC7/ROXY1 and GRXC8/ROXY2 in the nucleus. Interacts with TGA1, TGA2, TGA3, TGA4, TGA5, TGA6, TGA7, TGA10 and PAN. As to expression, mostly expressed in stems, inflorescence apex and flowers, and, to a lower extent, in seedlings, leaves and siliques.

It localises to the nucleus. Together with TGA10, basic leucine-zipper transcription factor required for anther development, probably via the activation of SPL expression in anthers and via the regulation of genes with functions in early and middle tapetal development. Required for signaling responses to pathogen-associated molecular patterns (PAMPs) such as flg22 that involves chloroplastic reactive oxygen species (ROS) production and subsequent expression of H(2)O(2)-responsive genes. This is Transcription factor TGA9 from Arabidopsis thaliana (Mouse-ear cress).